Here is a 420-residue protein sequence, read N- to C-terminus: Ribosome biogenesis protein WDR12 homolog (420 aa).

The ubiquitin-like (UBL) domain stretch occupies residues 10 to 92 (VQVHLKTKQE…EDAIEIEYVE (83 aa)). 7 WD repeats span residues 104–142 (LHDDWVSAVKARGKWILSGCYDNSLNLWTNKGKHILTIS), 143–185 (GHTA…NAVD), 192–231 (GHERGVDSVSVSPDGLRFATGSWDTMLKVWSAELDDGVEG), 250–288 (GHRESVSAVQWMDATTLLTGSWDYTLKVWDLSLEGIKTE), 290–329 (STNKSIFDASYSKLNRLILTASADKNLRLYDPRTNQGSVV), 335–375 (GHNA…APLY), and 379–417 (GHGDKVLDIDWSNPKYIVSGGVDNTVRVFKSRKALAEDT).

The protein belongs to the WD repeat WDR12/YTM1 family.

It is found in the nucleus. It localises to the nucleolus. The protein localises to the nucleoplasm. Its function is as follows. Required for maturation of ribosomal RNAs and formation of the large ribosomal subunit. This chain is Ribosome biogenesis protein WDR12 homolog, found in Drosophila sechellia (Fruit fly).